We begin with the raw amino-acid sequence, 415 residues long: Gamma-glutamyl phosphate reductase (415 aa).

Belongs to the gamma-glutamyl phosphate reductase family.

It localises to the cytoplasm. It catalyses the reaction L-glutamate 5-semialdehyde + phosphate + NADP(+) = L-glutamyl 5-phosphate + NADPH + H(+). Its pathway is amino-acid biosynthesis; L-proline biosynthesis; L-glutamate 5-semialdehyde from L-glutamate: step 2/2. Functionally, catalyzes the NADPH-dependent reduction of L-glutamate 5-phosphate into L-glutamate 5-semialdehyde and phosphate. The product spontaneously undergoes cyclization to form 1-pyrroline-5-carboxylate. This Bacillus cereus (strain 03BB102) protein is Gamma-glutamyl phosphate reductase.